A 398-amino-acid chain; its full sequence is G2/mitotic-specific cyclin-B2 (398 aa).

A Phosphothreonine modification is found at threonine 8. Residues serine 11, serine 77, and serine 92 each carry the phosphoserine modification. Phosphothreonine is present on threonine 94. 3 positions are modified to phosphoserine: serine 99, serine 392, and serine 398.

Belongs to the cyclin family. Cyclin AB subfamily. Interacts with the CDK1 protein kinase to form a serine/threonine kinase holoenzyme complex also known as maturation promoting factor (MPF). The cyclin subunit imparts substrate specificity to the complex.

Its function is as follows. Essential for the control of the cell cycle at the G2/M (mitosis) transition. This Macaca fascicularis (Crab-eating macaque) protein is G2/mitotic-specific cyclin-B2 (CCNB2).